We begin with the raw amino-acid sequence, 70 residues long: uncharacterized protein (70 aa).

This is an uncharacterized protein from Thermoproteus tenax virus 1 (strain KRA1) (TTV1).